The primary structure comprises 298 residues: Syntaxin-4 (298 aa).

Residues 1 to 274 (MRDRTHELRQ…NQKKARKKKV (274 aa)) lie on the Cytoplasmic side of the membrane. A phosphoserine mark is found at Ser-15, Ser-29, Ser-35, Ser-36, Ser-117, Ser-208, and Ser-248. Residues 38 to 163 (DDEFFQKVQT…ERIRRQLKIT (126 aa)) adopt a coiled-coil conformation. Residues 154–298 (ERIRRQLKIT…VIIGITITVG (145 aa)) are interaction with CENPF. The t-SNARE coiled-coil homology domain maps to 200-262 (LNEISARHSE…ERGQEHVKIA (63 aa)). A helical; Anchor for type IV membrane protein membrane pass occupies residues 275 to 295 (MIAICVSVTVLILAVIIGITI). The Extracellular portion of the chain corresponds to 296–298 (TVG).

It belongs to the syntaxin family. In terms of assembly, found in a complex with VAMP8 and SNAP23. Detected in a complex with SNAP23 and STXBP4. Interacts with SNAP23 and SNAPIN. Interacts with VAMP2. Interacts with LLGL1. Interacts (via C-terminus) with CENPF. Interacts with DOC2B. Interacts with STXBP3; excludes interaction with DOC2B and SNAP25. Interacts with STXBP4; excludes interaction with VAMP2. Component of the SNARE complex composed of STX4, SNAP23 and VAMP7 that interacts with SYT7 during lysosomal exocytosis. Interacts with STXBP6. Interacts with STXBP5L. In terms of tissue distribution, expressed in all tissues tested including adipose, brain, testis, intestine, liver, heart, spleen, skeletal muscle and kidney.

Its subcellular location is the cell membrane. It is found in the cell projection. It localises to the neuron projection. The protein resides in the stereocilium. Functionally, plasma membrane t-SNARE that mediates docking of transport vesicles. Necessary for the translocation of SLC2A4 from intracellular vesicles to the plasma membrane. In neurons, recruited at neurite tips to membrane domains rich in the phospholipid 1-oleoyl-2-palmitoyl-PC (OPPC) which promotes neurite tip surface expression of the dopamine transporter SLC6A3/DAT by facilitating fusion of SLC6A3-containing transport vesicles with the plasma membrane. Together with STXB3 and VAMP2, may also play a role in docking/fusion of intracellular GLUT4-containing vesicles with the cell surface in adipocytes and in docking of synaptic vesicles at presynaptic active zones. Required for normal hearing. The polypeptide is Syntaxin-4 (Stx4) (Rattus norvegicus (Rat)).